The primary structure comprises 301 residues: 33 kDa chaperonin (301 aa).

Intrachain disulfides connect Cys-239/Cys-241 and Cys-272/Cys-275.

Belongs to the HSP33 family. Under oxidizing conditions two disulfide bonds are formed involving the reactive cysteines. Under reducing conditions zinc is bound to the reactive cysteines and the protein is inactive.

The protein localises to the cytoplasm. Its function is as follows. Redox regulated molecular chaperone. Protects both thermally unfolding and oxidatively damaged proteins from irreversible aggregation. Plays an important role in the bacterial defense system toward oxidative stress. This chain is 33 kDa chaperonin, found in Nostoc sp. (strain PCC 7120 / SAG 25.82 / UTEX 2576).